The chain runs to 368 residues: Spermidine/putrescine import ATP-binding protein PotA (368 aa).

Positions 8–238 constitute an ABC transporter domain; the sequence is IELKNVSKIF…PVNLFVARFV (231 aa). Residue 40-47 coordinates ATP; sequence GPSGCGKT.

It belongs to the ABC transporter superfamily. Spermidine/putrescine importer (TC 3.A.1.11.1) family. The complex is composed of two ATP-binding proteins (PotA), two transmembrane proteins (PotB and PotC) and a solute-binding protein (PotD).

It localises to the cell membrane. The catalysed reaction is ATP + H2O + polyamine-[polyamine-binding protein]Side 1 = ADP + phosphate + polyamineSide 2 + [polyamine-binding protein]Side 1.. Its function is as follows. Part of the ABC transporter complex PotABCD involved in spermidine/putrescine import. Responsible for energy coupling to the transport system. The chain is Spermidine/putrescine import ATP-binding protein PotA from Lawsonia intracellularis (strain PHE/MN1-00).